A 258-amino-acid polypeptide reads, in one-letter code: Proteasome subunit alpha type-3 (258 aa).

Residues Lys-100, Lys-199, and Lys-231 each participate in a glycyl lysine isopeptide (Lys-Gly) (interchain with G-Cter in ubiquitin) cross-link.

Belongs to the peptidase T1A family. The 26S proteasome consists of a 20S proteasome core and two 19S regulatory subunits. The 20S proteasome core is composed of 28 subunits that are arranged in four stacked rings, resulting in a barrel-shaped structure. The two end rings are each formed by seven alpha subunits, and the two central rings are each formed by seven beta subunits. The catalytic chamber with the active sites is on the inside of the barrel.

Its subcellular location is the cytoplasm. It localises to the nucleus. In terms of biological role, the proteasome degrades poly-ubiquitinated proteins in the cytoplasm and in the nucleus. It is essential for the regulated turnover of proteins and for the removal of misfolded proteins. The proteasome is a multicatalytic proteinase complex that is characterized by its ability to cleave peptides with Arg, Phe, Tyr, Leu, and Glu adjacent to the leaving group at neutral or slightly basic pH. It has an ATP-dependent proteolytic activity. The protein is Proteasome subunit alpha type-3 (PRE9) of Saccharomyces cerevisiae (strain ATCC 204508 / S288c) (Baker's yeast).